Here is a 262-residue protein sequence, read N- to C-terminus: Elongator complex protein 5 (262 aa).

2 disordered regions span residues 181–214 (TPLD…FKIE) and 229–262 (PYER…DLCI). Over residues 200-211 (AEQTTEPASSTF) the composition is skewed to polar residues. Over residues 246–262 (DADDDFDEEDPDEDLCI) the composition is skewed to acidic residues.

It belongs to the ELP5 family. As to quaternary structure, component of the elongator complex composed of Elp1, Elp2, Elp3, Elp4, Elp5 and Elp6. The elongator complex associates with and stabilizes microtubules; efficient interaction requires the full complex.

It localises to the cytoplasm. The protein localises to the nucleus. Its subcellular location is the cytoskeleton. It is found in the spindle. It participates in tRNA modification; 5-methoxycarbonylmethyl-2-thiouridine-tRNA biosynthesis. Component of the elongator complex, which is required for multiple tRNA modifications, including mcm5U (5-methoxycarbonylmethyl uridine), mcm5s2U (5-methoxycarbonylmethyl-2-thiouridine), and ncm5U (5-carbamoylmethyl uridine). The elongator complex catalyzes the formation of carboxymethyluridine in the wobble base at position 34 in tRNAs. Binding by the elongator complex stabilizes microtubules and promotes their growth. This induces central spindle asymmetry, promoting polarized signaling endosome trafficking during asymmetric cell division and cell fate assignation of sensory organ precursor cells. In Drosophila melanogaster (Fruit fly), this protein is Elongator complex protein 5.